We begin with the raw amino-acid sequence, 179 residues long: MAKLHDYYKDEVVKKLMTQFNYNSVMQVPRVEKITLNMGVGEAIADKKLLDNAAADLAAISGQKPLITKARKSVAGFKIRQGYPIGCKVTLRGERMWEFFERLITIAVPRIRDFRGLSAKSFDGRGNYSMGVREQIIFPEIDYDKVDRVRGLDITITTTAKSDEEGRALLAAFDFPFRK.

It belongs to the universal ribosomal protein uL5 family. In terms of assembly, part of the 50S ribosomal subunit; part of the 5S rRNA/L5/L18/L25 subcomplex. Contacts the 5S rRNA and the P site tRNA. Forms a bridge to the 30S subunit in the 70S ribosome.

In terms of biological role, this is one of the proteins that bind and probably mediate the attachment of the 5S RNA into the large ribosomal subunit, where it forms part of the central protuberance. In the 70S ribosome it contacts protein S13 of the 30S subunit (bridge B1b), connecting the 2 subunits; this bridge is implicated in subunit movement. Contacts the P site tRNA; the 5S rRNA and some of its associated proteins might help stabilize positioning of ribosome-bound tRNAs. This Cronobacter sakazakii (strain ATCC BAA-894) (Enterobacter sakazakii) protein is Large ribosomal subunit protein uL5.